We begin with the raw amino-acid sequence, 58 residues long: UPF0391 membrane protein VP0082 (58 aa).

The next 2 membrane-spanning stretches (helical) occupy residues 4-24 (WMFIFLALALVSAVLGFSGIA) and 30-50 (VAQVIFYLFLLSLIVSIVFVI).

It belongs to the UPF0391 family.

The protein localises to the cell membrane. The chain is UPF0391 membrane protein VP0082 from Vibrio parahaemolyticus serotype O3:K6 (strain RIMD 2210633).